A 333-amino-acid polypeptide reads, in one-letter code: Tetraacyldisaccharide 4'-kinase (333 aa).

Residue 55 to 62 (TAGGNGKT) participates in ATP binding.

The protein belongs to the LpxK family.

The catalysed reaction is a lipid A disaccharide + ATP = a lipid IVA + ADP + H(+). The protein operates within glycolipid biosynthesis; lipid IV(A) biosynthesis; lipid IV(A) from (3R)-3-hydroxytetradecanoyl-[acyl-carrier-protein] and UDP-N-acetyl-alpha-D-glucosamine: step 6/6. Transfers the gamma-phosphate of ATP to the 4'-position of a tetraacyldisaccharide 1-phosphate intermediate (termed DS-1-P) to form tetraacyldisaccharide 1,4'-bis-phosphate (lipid IVA). The polypeptide is Tetraacyldisaccharide 4'-kinase (Pectobacterium atrosepticum (strain SCRI 1043 / ATCC BAA-672) (Erwinia carotovora subsp. atroseptica)).